We begin with the raw amino-acid sequence, 369 residues long: Melanoma-associated antigen 10 (369 aa).

The disordered stretch occupies residues 1–131 (MPRAPKRQRC…VLPDSESLPR (131 aa)). Low complexity predominate over residues 39-62 (SSSTSTSSSFPSSFPSSSSSSSSS). Composition is skewed to polar residues over residues 85-96 (QSAQIACSSPSV) and 107-121 (EGSS…STLQ). The 200-residue stretch at 134-333 (IDEKVTDLVQ…RSFPLWYEEA (200 aa)) folds into the MAGE domain. The interval 340–369 (RAQDRIATTDDTTAMASASSSATGSFSYPE) is disordered. Residues 348–369 (TDDTTAMASASSSATGSFSYPE) show a composition bias toward low complexity.

As to expression, expressed in many tumors of several types, such as melanoma, head and neck squamous cell carcinoma, lung carcinoma and breast carcinoma, but not in normal tissues except for spermatogonia, spermatocytes and placenta.

The protein localises to the nucleus. In terms of biological role, not known, though may play a role in embryonal development and tumor transformation or aspects of tumor progression. The polypeptide is Melanoma-associated antigen 10 (MAGEA10) (Homo sapiens (Human)).